The primary structure comprises 330 residues: Dof zinc finger protein DOF2.4 (330 aa).

Residues 14–25 are compositionally biased toward polar residues; sequence NWQQAPPSNYNH. Positions 14–70 are disordered; sequence NWQQAPPSNYNHDGTGASANGGHVLRPQLQPQQQPQQQPHPNGSGGGGGGGGGSIRA. Low complexity predominate over residues 40–55; it reads PQLQPQQQPQQQPHPN. Gly residues predominate over residues 56 to 68; it reads GSGGGGGGGGGSI. The Dof-type zinc-finger motif lies at 89–143; that stretch reads LKCPRCESTNTKFCYFNNYSLTQPRHFCKTCRRYWTRGGALRNVPVGGGCRRNRR. Positions 91, 94, 116, and 119 each coordinate Zn(2+). Disordered regions lie at residues 133–165 and 255–276; these read PVGG…SFSS and QQSS…SANG. Low complexity predominate over residues 146–165; the sequence is SNSNNNNNSTATSNNTSFSS. Positions 265–276 are enriched in polar residues; sequence EDSSNPNPSANG.

As to expression, specific to the vascular tissues. The PEAR proteins (e.g. DOF2.4, DOF5.1, DOF3.2, DOF1.1, DOF5.6 and DOF5.3) form a short-range concentration gradient that peaks at protophloem sieve elements (PSE).

It localises to the nucleus. Its subcellular location is the symplast. Transcription factor that binds specifically to a 5'-AA[AG]G-3' consensus core sequence. Probably involved in early processes for vascular development. The PEAR proteins (e.g. DOF2.4, DOF5.1, DOF3.2, DOF1.1, DOF5.6 and DOF5.3) activate gene expression that promotes radial growth of protophloem sieve elements. Triggers the transcription of HD-ZIP III genes, especially in the central domain of vascular tissue. This chain is Dof zinc finger protein DOF2.4, found in Arabidopsis thaliana (Mouse-ear cress).